A 422-amino-acid chain; its full sequence is UDP-N-acetylglucosamine 1-carboxyvinyltransferase (422 aa).

22 to 23 (KN) contacts phosphoenolpyruvate. A UDP-N-acetyl-alpha-D-glucosamine-binding site is contributed by R94. Residue C118 is the Proton donor of the active site. The residue at position 118 (C118) is a 2-(S-cysteinyl)pyruvic acid O-phosphothioketal. UDP-N-acetyl-alpha-D-glucosamine is bound by residues 123–127 (RPVDL), D309, and I331.

The protein belongs to the EPSP synthase family. MurA subfamily.

The protein resides in the cytoplasm. The enzyme catalyses phosphoenolpyruvate + UDP-N-acetyl-alpha-D-glucosamine = UDP-N-acetyl-3-O-(1-carboxyvinyl)-alpha-D-glucosamine + phosphate. The protein operates within cell wall biogenesis; peptidoglycan biosynthesis. Its function is as follows. Cell wall formation. Adds enolpyruvyl to UDP-N-acetylglucosamine. In Cereibacter sphaeroides (strain KD131 / KCTC 12085) (Rhodobacter sphaeroides), this protein is UDP-N-acetylglucosamine 1-carboxyvinyltransferase.